Here is a 94-residue protein sequence, read N- to C-terminus: Acylphosphatase (94 aa).

Positions Arg7–Asp94 constitute an Acylphosphatase-like domain. Catalysis depends on residues Arg22 and Asn40.

Belongs to the acylphosphatase family.

The enzyme catalyses an acyl phosphate + H2O = a carboxylate + phosphate + H(+). This is Acylphosphatase (acyP) from Paenarthrobacter aurescens (strain TC1).